A 445-amino-acid chain; its full sequence is Glycine--tRNA ligase (445 aa).

Substrate is bound by residues arginine 97 and glutamate 145. Residues 177-179 (RNE), 187-192 (FRTCEF), 262-263 (EI), and 308-311 (GLTR) each bind ATP. 192-196 (FEQME) is a binding site for substrate. Residue 304-308 (ETSAG) participates in substrate binding.

This sequence belongs to the class-II aminoacyl-tRNA synthetase family. As to quaternary structure, homodimer.

Its subcellular location is the cytoplasm. The enzyme catalyses tRNA(Gly) + glycine + ATP = glycyl-tRNA(Gly) + AMP + diphosphate. Its function is as follows. Catalyzes the attachment of glycine to tRNA(Gly). This Borreliella afzelii (strain PKo) (Borrelia afzelii) protein is Glycine--tRNA ligase.